The following is a 507-amino-acid chain: Inactive alanine aminotransferase (507 aa).

Ala173, Ser174, Tyr199, Asn255, and Ser324 together coordinate pyridoxal 5'-phosphate. An N6-(pyridoxal phosphate)lysine modification is found at Lys327. Arg336 lines the pyridoxal 5'-phosphate pocket.

The protein belongs to the class-I pyridoxal-phosphate-dependent aminotransferase family. Alanine aminotransferase subfamily. Homodimer. The cofactor is pyridoxal 5'-phosphate.

It is found in the cytoplasm. The protein localises to the nucleus. Inactive alanine aminotransferase. Forms a catalytically active Schiff base with PLP, but lacks alanine transaminase activity, probably due to an altered structural conformation of the dimeric enzyme. This suggests this protein may have a yet undiscovered physiological function. This Saccharomyces cerevisiae (strain ATCC 204508 / S288c) (Baker's yeast) protein is Inactive alanine aminotransferase (ALT2).